The following is a 90-amino-acid chain: Secretoglobin family 1D member 2 (90 aa).

Positions 1 to 21 (MKLSVCLLLVTLALCCYQANA) are cleaved as a signal peptide.

This sequence belongs to the secretoglobin family. Lipophilin subfamily. Highest expression was found in skeletal muscle. Expressed as well in thymus, trachea, kidney, steroid responsive tissues (prostate, testis, uterus, breast and ovary) and salivary gland.

It localises to the secreted. May bind androgens and other steroids, may also bind estramustine, a chemotherapeutic agent used for prostate cancer. May be under transcriptional regulation of steroid hormones. The protein is Secretoglobin family 1D member 2 (SCGB1D2) of Homo sapiens (Human).